A 111-amino-acid polypeptide reads, in one-letter code: UPF0122 protein LACR_1522 (111 aa).

It belongs to the UPF0122 family.

In terms of biological role, might take part in the signal recognition particle (SRP) pathway. This is inferred from the conservation of its genetic proximity to ftsY/ffh. May be a regulatory protein. The protein is UPF0122 protein LACR_1522 of Lactococcus lactis subsp. cremoris (strain SK11).